The primary structure comprises 276 residues: Diaminopimelate epimerase (276 aa).

Substrate-binding residues include Asn-13, Gln-46, and Asn-66. Cys-75 (proton donor) is an active-site residue. Residues 76–77 (GN), Asn-159, Asn-192, and 210–211 (ER) contribute to the substrate site. Catalysis depends on Cys-219, which acts as the Proton acceptor. Position 220 to 221 (220 to 221 (GS)) interacts with substrate.

It belongs to the diaminopimelate epimerase family. Homodimer.

It is found in the cytoplasm. The enzyme catalyses (2S,6S)-2,6-diaminopimelate = meso-2,6-diaminopimelate. It functions in the pathway amino-acid biosynthesis; L-lysine biosynthesis via DAP pathway; DL-2,6-diaminopimelate from LL-2,6-diaminopimelate: step 1/1. Catalyzes the stereoinversion of LL-2,6-diaminopimelate (L,L-DAP) to meso-diaminopimelate (meso-DAP), a precursor of L-lysine and an essential component of the bacterial peptidoglycan. This chain is Diaminopimelate epimerase, found in Colwellia psychrerythraea (strain 34H / ATCC BAA-681) (Vibrio psychroerythus).